Consider the following 176-residue polypeptide: Inorganic pyrophosphatase (176 aa).

Substrate contacts are provided by K30, R44, and Y56. Mg(2+) contacts are provided by D66, D71, and D103. Y140 serves as a coordination point for substrate.

This sequence belongs to the PPase family. As to quaternary structure, homohexamer. Mg(2+) is required as a cofactor.

It is found in the cytoplasm. The enzyme catalyses diphosphate + H2O = 2 phosphate + H(+). Catalyzes the hydrolysis of inorganic pyrophosphate (PPi) forming two phosphate ions. This Methanothermobacter thermautotrophicus (strain ATCC 29096 / DSM 1053 / JCM 10044 / NBRC 100330 / Delta H) (Methanobacterium thermoautotrophicum) protein is Inorganic pyrophosphatase.